Here is a 1231-residue protein sequence, read N- to C-terminus: RNA-binding protein 33 (1231 aa).

Gly residues predominate over residues 1–13; the sequence is MAAALGAGGGAGA. 2 disordered regions span residues 1 to 168 and 219 to 261; these read MAAA…EEEQ and SQVA…FKTE. Ala2 is modified (N-acetylalanine). Over residues 20-36 the composition is skewed to basic and acidic residues; that stretch reads QFDKPGAERSWRRRAAD. Positions 37-49 are enriched in acidic residues; it reads EDWDSELEDDLLG. Ser41 carries the phosphoserine modification. A compositionally biased stretch (polar residues) spans 82-108; it reads FSSQGVTISLNTTSGIVTSFELSDNTN. Composition is skewed to acidic residues over residues 112–124 and 153–168; these read GEQESEYEQGDDE and LTEDQIEYGDEPEEEQ. The segment covering 224–240 has biased composition (basic and acidic residues); that stretch reads ETHEGGMETLELQKDIK. Positions 241 to 252 are enriched in acidic residues; that stretch reads EESDEEDDDDEE. Ser243 and Ser271 each carry phosphoserine. Disordered stretches follow at residues 297 to 436 and 452 to 761; these read FEER…KNIH and PLLP…NLRE. Positions 305–316 are enriched in basic residues; the sequence is KQGRYGSRRGGR. A compositionally biased stretch (basic and acidic residues) spans 327 to 344; sequence GDQRRDNSERGRMKEHRP. Residues 360-379 show a composition bias toward pro residues; the sequence is LIPPPQPQPPPPPPPPPPQQ. Residues 380–398 show a composition bias toward low complexity; the sequence is QPIRSLFQQQQLQPLLPLQ. Positions 469–483 are enriched in pro residues; it reads FPGPPEFPQHTPGPV. Residue Arg520 is modified to Asymmetric dimethylarginine. 4 stretches are compositionally biased toward pro residues: residues 531-540, 604-618, 632-647, and 661-682; these read SPPPPPPPPT, FIPPRQPFLPSPGQP, LHPPLPPPHQPQPQPQ, and PLQPPLQPPHQPPPQHQPPPQH. 2 stretches are compositionally biased toward polar residues: residues 713 to 728 and 736 to 759; these read QTAQPQPSSSRMQCTP and AASQNISKRPMQQMQPTAPRNSNL. Ser792 and Ser816 each carry phosphoserine. Disordered regions lie at residues 796-840, 876-932, and 998-1080; these read RAVV…ETRL, ERLA…FPGA, and ETPH…MRQQ. Residues 820–829 show a composition bias toward basic and acidic residues; sequence QPKEEAKPEA. A coiled-coil region spans residues 840-891; it reads LYRLKIEEQKRLREEILKQKELRRQQQAGARKKELLERLAQQQQQQQQQQHQ. The segment covering 880 to 901 has biased composition (low complexity); that stretch reads QQQQQQQQQQHQPQQQQQQPQQ. Residues Ser1002 and Ser1010 each carry the phosphoserine modification. Residue Lys1019 forms a Glycyl lysine isopeptide (Lys-Gly) (interchain with G-Cter in SUMO2) linkage. Ser1032 and Ser1051 each carry phosphoserine.

In terms of assembly, associates with the NXF1-NXT1 RNA export complex. Interacts with ALKBH5; facilitating ALKBH5 recruitment to m6A-containing transcripts. Interacts with SENP1; promoting ALKBH5 deSUMOylation and subsequent activation.

Its subcellular location is the nucleus. It is found in the cytoplasm. Functionally, RNA reader protein, which recognizes and binds specific RNAs, thereby regulating RNA metabolic processes, such as mRNA export, mRNA stability and/or translation. Binds a subset of intronless RNAs containing GC-rich elements, such as NORAD, and promotes their nuclear export by recruiting target RNAs to components of the NXF1-NXT1 RNA export machinery. Specifically recognizes and binds N6-methyladenosine (m6A)-containing mRNAs, promoting their demethylation by ALKBH5. Acts as an molecular adapter, which (1) promotes ALKBH5 recruitment to m6A-containing transcripts and (2) activates ALKBH5 demethylase activity by recruiting SENP1, leading to ALKBH5 deSUMOylation and subsequent activation. This chain is RNA-binding protein 33, found in Mus musculus (Mouse).